Here is a 133-residue protein sequence, read N- to C-terminus: Putative biopolymer transport protein ExbD-like 1 (133 aa).

Residues 1-15 (MNYDNYWDEDKPELN) are Cytoplasmic-facing. The helical transmembrane segment at 16 to 32 (ITPLVDVMLVLLAILMV) threads the bilayer. Over 33–133 (TTPTLTYKEE…FLKVSLITSP (101 aa)) the chain is Periplasmic.

It belongs to the ExbD/TolR family.

Its subcellular location is the cell inner membrane. In Helicobacter pylori (strain ATCC 700392 / 26695) (Campylobacter pylori), this protein is Putative biopolymer transport protein ExbD-like 1.